Consider the following 568-residue polypeptide: Zinc finger protein 76 (568 aa).

K24 is covalently cross-linked (Glycyl lysine isopeptide (Lys-Gly) (interchain with G-Cter in SUMO2)). Repeat copies occupy residues 34–45, 62–73, and 88–99. The tract at residues 34–99 is 3 X 12 AA approximate repeats; the sequence is IQLEDGTTAY…LEDGSTAYIH (66 aa). C2H2-type zinc fingers lie at residues 165 to 189, 195 to 219, 225 to 249, 255 to 279, 285 to 309, 315 to 339, and 345 to 368; these read FRCG…ERAH, YRCD…VRTH, YKCP…VRTH, FRCP…VRTH, YTCP…VRIH, YVCT…HVVH, and YTCS…RSAH. The interval 365-402 is disordered; that stretch reads RSAHGELEATEESEQALYEQQQLEAASAAEESPPPKPT. A compositionally biased stretch (low complexity) spans 379–395; sequence QALYEQQQLEAASAAEE.

This sequence belongs to the krueppel C2H2-type zinc-finger protein family.

The protein resides in the nucleus. May be involved in transcriptional regulation. This chain is Zinc finger protein 76 (Znf76), found in Mus musculus (Mouse).